Here is a 313-residue protein sequence, read N- to C-terminus: Pyrimidine-specific ribonucleoside hydrolase RihB (313 aa).

Asp11 acts as the Proton acceptor in catalysis. Positions 11, 16, and 124 each coordinate Ca(2+). Gln227 and His239 together coordinate substrate. Asp240 is a binding site for Ca(2+).

Belongs to the IUNH family. RihB subfamily. In terms of assembly, homotetramer. The cofactor is Ca(2+).

The catalysed reaction is a pyrimidine ribonucleoside + H2O = a pyrimidine nucleobase + D-ribose. In terms of biological role, hydrolyzes cytidine or uridine to ribose and cytosine or uracil, respectively. Has a clear preference for cytidine over uridine. Strictly specific for ribonucleosides. This chain is Pyrimidine-specific ribonucleoside hydrolase RihB, found in Escherichia coli (strain SMS-3-5 / SECEC).